Reading from the N-terminus, the 98-residue chain is NADH-ubiquinone oxidoreductase chain 4L (98 aa).

The next 3 helical transmembrane spans lie at 1–21 (MPYIYMNITLAFVISLIGTLM), 29–49 (SLLCLEGMMLSLFTLNALLSL), and 61–81 (LILLVFAACEAAVGLALLIMI).

This sequence belongs to the complex I subunit 4L family. In terms of assembly, core subunit of respiratory chain NADH dehydrogenase (Complex I) which is composed of 45 different subunits.

The protein localises to the mitochondrion inner membrane. It catalyses the reaction a ubiquinone + NADH + 5 H(+)(in) = a ubiquinol + NAD(+) + 4 H(+)(out). In terms of biological role, core subunit of the mitochondrial membrane respiratory chain NADH dehydrogenase (Complex I) which catalyzes electron transfer from NADH through the respiratory chain, using ubiquinone as an electron acceptor. Part of the enzyme membrane arm which is embedded in the lipid bilayer and involved in proton translocation. The chain is NADH-ubiquinone oxidoreductase chain 4L (MT-ND4L) from Mammuthus primigenius (Siberian woolly mammoth).